A 104-amino-acid chain; its full sequence is Zinc-containing ferredoxin-1 (104 aa).

The segment at 2 to 37 (GIDPNYRTNRQVVGEHSGHKVYGPVEPPKVLGIHGT) is N-terminal extension. Residues H17 and H20 each coordinate Zn(2+). An N6-methyllysine modification is found at K30. H35 lines the Zn(2+) pocket. 2 4Fe-4S ferredoxin-type domains span residues 38-66 (IVGV…WYDT) and 75-104 (KADP…VKPP). Residues C46 and C52 each coordinate [3Fe-4S] cluster. Position 56 (C56) interacts with [4Fe-4S] cluster. Zn(2+) is bound at residue D77. [4Fe-4S] cluster-binding residues include C84, C87, and C90. C94 provides a ligand contact to [3Fe-4S] cluster.

[3Fe-4S] cluster is required as a cofactor. The cofactor is [4Fe-4S] cluster. Zn(2+) serves as cofactor.

Functionally, ferredoxins are iron-sulfur proteins that transfer electrons in a wide variety of metabolic reactions. The chain is Zinc-containing ferredoxin-1 (zfx1) from Sulfurisphaera tokodaii (strain DSM 16993 / JCM 10545 / NBRC 100140 / 7) (Sulfolobus tokodaii).